A 429-amino-acid polypeptide reads, in one-letter code: 3-phosphoshikimate 1-carboxyvinyltransferase (429 aa).

Residues K22, S23, and R27 each contribute to the 3-phosphoshikimate site. K22 contributes to the phosphoenolpyruvate binding site. Phosphoenolpyruvate-binding residues include G94 and R122. S167, Q169, D315, and K342 together coordinate 3-phosphoshikimate. Q169 serves as a coordination point for phosphoenolpyruvate. Catalysis depends on D315, which acts as the Proton acceptor. Phosphoenolpyruvate is bound by residues R346 and R388.

This sequence belongs to the EPSP synthase family. As to quaternary structure, monomer.

The protein resides in the cytoplasm. The enzyme catalyses 3-phosphoshikimate + phosphoenolpyruvate = 5-O-(1-carboxyvinyl)-3-phosphoshikimate + phosphate. The protein operates within metabolic intermediate biosynthesis; chorismate biosynthesis; chorismate from D-erythrose 4-phosphate and phosphoenolpyruvate: step 6/7. Its function is as follows. Catalyzes the transfer of the enolpyruvyl moiety of phosphoenolpyruvate (PEP) to the 5-hydroxyl of shikimate-3-phosphate (S3P) to produce enolpyruvyl shikimate-3-phosphate and inorganic phosphate. This Geotalea daltonii (strain DSM 22248 / JCM 15807 / FRC-32) (Geobacter daltonii) protein is 3-phosphoshikimate 1-carboxyvinyltransferase.